A 540-amino-acid chain; its full sequence is CTP synthase (540 aa).

The segment at 1-267 (MKIMKFIFIT…GKLVTKKLNL (267 aa)) is amidoligase domain. Position 15 (serine 15) interacts with CTP. Serine 15 is a UTP binding site. 16–21 (SLGKGI) provides a ligand contact to ATP. Residue tyrosine 56 coordinates L-glutamine. Aspartate 73 contacts ATP. Residues aspartate 73 and glutamate 141 each contribute to the Mg(2+) site. CTP is bound by residues 148 to 150 (DIE), 188 to 193 (KTKPTQ), and lysine 224. UTP-binding positions include 188 to 193 (KTKPTQ) and lysine 224. 240-242 (RDA) serves as a coordination point for ATP. Positions 292 to 540 (TIGIVGKYVE…VRASLGEKIK (249 aa)) constitute a Glutamine amidotransferase type-1 domain. Position 360 (glycine 360) interacts with L-glutamine. The Nucleophile; for glutamine hydrolysis role is filled by cysteine 387. L-glutamine is bound by residues 388 to 391 (MGMQ), glutamate 411, and arginine 468. Catalysis depends on residues histidine 513 and glutamate 515.

Belongs to the CTP synthase family. In terms of assembly, homotetramer.

The enzyme catalyses UTP + L-glutamine + ATP + H2O = CTP + L-glutamate + ADP + phosphate + 2 H(+). It catalyses the reaction L-glutamine + H2O = L-glutamate + NH4(+). The catalysed reaction is UTP + NH4(+) + ATP = CTP + ADP + phosphate + 2 H(+). It participates in pyrimidine metabolism; CTP biosynthesis via de novo pathway; CTP from UDP: step 2/2. Its activity is regulated as follows. Allosterically activated by GTP, when glutamine is the substrate; GTP has no effect on the reaction when ammonia is the substrate. The allosteric effector GTP functions by stabilizing the protein conformation that binds the tetrahedral intermediate(s) formed during glutamine hydrolysis. Inhibited by the product CTP, via allosteric rather than competitive inhibition. Catalyzes the ATP-dependent amination of UTP to CTP with either L-glutamine or ammonia as the source of nitrogen. Regulates intracellular CTP levels through interactions with the four ribonucleotide triphosphates. This is CTP synthase from Methanocaldococcus jannaschii (strain ATCC 43067 / DSM 2661 / JAL-1 / JCM 10045 / NBRC 100440) (Methanococcus jannaschii).